Consider the following 354-residue polypeptide: DNA ligase C2 (354 aa).

K29 (N6-AMP-lysine intermediate) is an active-site residue.

Belongs to the ATP-dependent DNA ligase family.

It catalyses the reaction ATP + (deoxyribonucleotide)n-3'-hydroxyl + 5'-phospho-(deoxyribonucleotide)m = (deoxyribonucleotide)n+m + AMP + diphosphate.. Its function is as follows. DNA ligase that seals nicks in double-stranded DNA during DNA replication, DNA recombination and DNA repair. Has weak intrinsic nick joining activities and accumulates DNA-adenylate. Acts as a backup for LigD in the Ku-LigD-dependent NHEJ pathway. The sequence is that of DNA ligase C2 (ligC2) from Mycolicibacterium smegmatis (strain ATCC 700084 / mc(2)155) (Mycobacterium smegmatis).